The chain runs to 86 residues: Small ribosomal subunit protein bS20 (86 aa).

Over residues 1–27 (MANSKSAKKRAIQAEKRRQHNASRRSM) the composition is skewed to basic residues. A disordered region spans residues 1–28 (MANSKSAKKRAIQAEKRRQHNASRRSMM).

It belongs to the bacterial ribosomal protein bS20 family.

In terms of biological role, binds directly to 16S ribosomal RNA. The polypeptide is Small ribosomal subunit protein bS20 (Vibrio parahaemolyticus serotype O3:K6 (strain RIMD 2210633)).